The following is a 426-amino-acid chain: Glutamate-1-semialdehyde 2,1-aminomutase (426 aa).

Lys268 carries the post-translational modification N6-(pyridoxal phosphate)lysine.

It belongs to the class-III pyridoxal-phosphate-dependent aminotransferase family. HemL subfamily. It depends on pyridoxal 5'-phosphate as a cofactor.

It localises to the cytoplasm. It carries out the reaction (S)-4-amino-5-oxopentanoate = 5-aminolevulinate. It functions in the pathway porphyrin-containing compound metabolism; protoporphyrin-IX biosynthesis; 5-aminolevulinate from L-glutamyl-tRNA(Glu): step 2/2. This is Glutamate-1-semialdehyde 2,1-aminomutase from Saccharolobus islandicus (strain Y.N.15.51 / Yellowstone #2) (Sulfolobus islandicus).